Reading from the N-terminus, the 249-residue chain is Coproheme decarboxylase (249 aa).

Residues Arg-131, 145–149, His-172, and Gln-185 contribute to the Fe-coproporphyrin III site; that span reads YPMDK. Tyr-145 is a catalytic residue.

It belongs to the ChdC family. Type 1 subfamily. Fe-coproporphyrin III is required as a cofactor.

The enzyme catalyses Fe-coproporphyrin III + 2 H2O2 + 2 H(+) = heme b + 2 CO2 + 4 H2O. The catalysed reaction is Fe-coproporphyrin III + H2O2 + H(+) = harderoheme III + CO2 + 2 H2O. It catalyses the reaction harderoheme III + H2O2 + H(+) = heme b + CO2 + 2 H2O. It participates in porphyrin-containing compound metabolism; protoheme biosynthesis. Its function is as follows. Involved in coproporphyrin-dependent heme b biosynthesis. Catalyzes the decarboxylation of Fe-coproporphyrin III (coproheme) to heme b (protoheme IX), the last step of the pathway. The reaction occurs in a stepwise manner with a three-propionate intermediate. The chain is Coproheme decarboxylase from Staphylococcus saprophyticus subsp. saprophyticus (strain ATCC 15305 / DSM 20229 / NCIMB 8711 / NCTC 7292 / S-41).